The following is a 287-amino-acid chain: ATP synthase gamma chain (287 aa).

Belongs to the ATPase gamma chain family. F-type ATPases have 2 components, CF(1) - the catalytic core - and CF(0) - the membrane proton channel. CF(1) has five subunits: alpha(3), beta(3), gamma(1), delta(1), epsilon(1). CF(0) has three main subunits: a, b and c.

The protein resides in the cell inner membrane. Functionally, produces ATP from ADP in the presence of a proton gradient across the membrane. The gamma chain is believed to be important in regulating ATPase activity and the flow of protons through the CF(0) complex. The sequence is that of ATP synthase gamma chain from Ectopseudomonas mendocina (strain ymp) (Pseudomonas mendocina).